Here is a 620-residue protein sequence, read N- to C-terminus: Glutathione-regulated potassium-efflux system protein KefC (620 aa).

Residues 1-3 lie on the Periplasmic side of the membrane; that stretch reads MDS. Residues 4–24 form a helical membrane-spanning segment; that stretch reads HTLLQALIYLGSAALIVPIAV. Residue arginine 25 is a topological domain, cytoplasmic. Residues 26–46 form a helical membrane-spanning segment; it reads LGLGSVLGYLIAGCIIGPWGL. The Periplasmic portion of the chain corresponds to 47 to 53; it reads RLVTDAE. Residues 54–74 form a helical membrane-spanning segment; that stretch reads SILHFAEIGVVLMLFVIGLEL. The Cytoplasmic portion of the chain corresponds to 75–89; that stretch reads DPQRLWKLRASVFGG. Residues 90 to 110 traverse the membrane as a helical segment; the sequence is GALQMVVCGGLIGLFCMFLGL. At 111-113 the chain is on the periplasmic side; the sequence is RWQ. A helical membrane pass occupies residues 114–134; sequence VAELIGMTLALSSTAIAMQAM. Residues 135–148 lie on the Cytoplasmic side of the membrane; it reads NERNLTVSQVGRSA. Residues 149-169 form a helical membrane-spanning segment; it reads FAVLLFQDIAAIPLVAMIPLL. The Periplasmic portion of the chain corresponds to 170–177; that stretch reads AASGASTT. Residues 178–198 traverse the membrane as a helical segment; that stretch reads LGAFALSALKVAGALALVVLL. The Cytoplasmic segment spans residues 199–213; that stretch reads GRYVTRPALRFVARS. A helical transmembrane segment spans residues 214 to 233; the sequence is GLREVFSAVALFLVFGFGLL. The Periplasmic segment spans residues 234 to 236; it reads LEE. A helical membrane pass occupies residues 237–254; that stretch reads VGLSMAMGAFLAGVLLAS. The Cytoplasmic portion of the chain corresponds to 255 to 269; that stretch reads SEYRHALESDIEPFK. A helical transmembrane segment spans residues 270-290; that stretch reads GLLLGLFFIGVGMSIDFGTLV. Over 291–293 the chain is Periplasmic; that stretch reads ENP. A helical membrane pass occupies residues 294–314; that stretch reads LRILLLLAGFLAIKIVMLWLV. Residues 315-326 are Cytoplasmic-facing; it reads ARTLGVPAKQRR. Residues 327–347 form a helical membrane-spanning segment; that stretch reads WFAVLLGQGSEFAFVVFGAAQ. Residues 348–358 are Periplasmic-facing; the sequence is MADVLEPEWAK. A helical transmembrane segment spans residues 359–379; sequence ALTLAVALSMAATPIFLVLLT. Residues 380-620 are Cytoplasmic-facing; it reads RMEKTATGEA…ADEPEVKPSI (241 aa). The region spanning 399–518 is the RCK N-terminal domain; sequence QPRVIVAGFG…AGVAMPERET (120 aa). The segment at 599-620 is disordered; it reads QGTAEGKHSGKAADEPEVKPSI. Residues 603-620 are compositionally biased toward basic and acidic residues; sequence EGKHSGKAADEPEVKPSI.

It belongs to the monovalent cation:proton antiporter 2 (CPA2) transporter (TC 2.A.37) family. KefC subfamily. As to quaternary structure, homodimer. Interacts with the regulatory subunit KefF.

The protein localises to the cell inner membrane. In terms of biological role, pore-forming subunit of a potassium efflux system that confers protection against electrophiles. Catalyzes K(+)/H(+) antiport. The chain is Glutathione-regulated potassium-efflux system protein KefC from Salmonella typhi.